Here is a 398-residue protein sequence, read N- to C-terminus: Acetate kinase (398 aa).

Mg(2+) is bound at residue N7. K14 serves as a coordination point for ATP. Residue R91 participates in substrate binding. D148 serves as the catalytic Proton donor/acceptor. ATP is bound by residues 208 to 212 (HLGNG), 283 to 285 (DFR), and 331 to 335 (GLGEN). E384 contributes to the Mg(2+) binding site.

The protein belongs to the acetokinase family. Homodimer. Mg(2+) is required as a cofactor. Requires Mn(2+) as cofactor.

It localises to the cytoplasm. It catalyses the reaction acetate + ATP = acetyl phosphate + ADP. It participates in metabolic intermediate biosynthesis; acetyl-CoA biosynthesis; acetyl-CoA from acetate: step 1/2. In terms of biological role, catalyzes the formation of acetyl phosphate from acetate and ATP. Can also catalyze the reverse reaction. This is Acetate kinase from Natranaerobius thermophilus (strain ATCC BAA-1301 / DSM 18059 / JW/NM-WN-LF).